The chain runs to 630 residues: L-amino-acid oxidase (630 aa).

An N-terminal signal peptide occupies residues 1-21 (MAGLALRLVLAATLLGLAGSL). Residues C35 and C198 are joined by a disulfide bond. Residue N53 is glycosylated (N-linked (GlcNAc...) asparagine). FAD-binding positions include 68-69 (VA), 88-89 (EA), R96, and 112-115 (GAMR). R115 contributes to the substrate binding site. N-linked (GlcNAc...) asparagine glycosylation is found at N133 and N219. V286 serves as a coordination point for FAD. Substrate is bound at residue Y395. FAD-binding positions include E479 and 486–491 (GWVETA). 486 to 487 (GW) provides a ligand contact to substrate. Positions 532-554 (GERPEEQQAREEVSPDEQEPSHK) are disordered.

The protein belongs to the flavin monoamine oxidase family. FIG1 subfamily. Requires FAD as cofactor. As to expression, primarily found in immune tissues. Primarily found in immune tissues, mostly in B-lymphocytes. In terms of tissue distribution, restricted to the testis, predominantly in Sertoli cells at the periphery of the ducts, and the brain, including Purkinje cells, hippocampus and mitral cells in the olfactory bulb. No isoform 2 expression in fetal tissues.

It is found in the secreted. The protein localises to the cytoplasmic vesicle. Its subcellular location is the secretory vesicle. The protein resides in the acrosome. It localises to the lysosome. The enzyme catalyses an L-alpha-amino acid + O2 + H2O = a 2-oxocarboxylate + H2O2 + NH4(+). It carries out the reaction L-tryptophan + O2 + H2O = indole-3-pyruvate + H2O2 + NH4(+). It catalyses the reaction L-phenylalanine + O2 + H2O = 3-phenylpyruvate + H2O2 + NH4(+). The catalysed reaction is L-tyrosine + O2 + H2O = 3-(4-hydroxyphenyl)pyruvate + H2O2 + NH4(+). The enzyme catalyses L-arginine + O2 + H2O = 5-guanidino-2-oxopentanoate + H2O2 + NH4(+). It participates in amino-acid degradation; L-tryptophan degradation via pyruvate pathway. Its function is as follows. Secreted L-amino-acid oxidase that acts as a key immunoregulator. Has preference for L-aromatic amino acids: converts phenylalanine (Phe), tyrosine (Tyr) and tryptophan (Trp) to phenylpyruvic acid (PP), hydroxyphenylpyruvic acid (HPP), and indole-3-pyruvic acid (I3P), respectively. Also has weak L-arginine oxidase activity. Acts as a negative regulator of anti-tumor immunity by mediating Trp degradation via an indole pyruvate pathway that activates the transcription factor AHR. IL4I1-mediated Trp catabolism generates I3P, giving rise to indole metabolites (indole-3-acetic acid (IAA) and indole-3-aldehyde (I3A)) and kynurenic acid, which act as ligands for AHR, a ligand-activated transcription factor that plays important roles in immunity and cancer. AHR activation by indoles following IL4I1-mediated Trp degradation enhances tumor progression by promoting cancer cell motility and suppressing adaptive immunity. Also has an immunoregulatory function in some immune cell, probably by mediating Trp degradation and promoting downstream AHR activation: inhibits T-cell activation and proliferation, promotes the differentiation of naive CD4(+) T-cells into FOXP3(+) regulatory T-cells (Treg) and regulates the development and function of B-cells. Also regulates M2 macrophage polarization by inhibiting T-cell activation. Also has antibacterial properties by inhibiting growth of Gram negative and Gram positive bacteria through the production of NH4(+) and H2O2. The protein is L-amino-acid oxidase of Mus musculus (Mouse).